Reading from the N-terminus, the 208-residue chain is Putative dioxygenase RT0384 (208 aa).

Belongs to the intradiol ring-cleavage dioxygenase family.

This is Putative dioxygenase RT0384 from Rickettsia typhi (strain ATCC VR-144 / Wilmington).